We begin with the raw amino-acid sequence, 198 residues long: DnaJ homolog subfamily C member 12 (198 aa).

Residue methionine 1 is modified to N-acetylmethionine. The J domain occupies aspartate 14 to arginine 79. Residues glutamate 114–glutamate 156 show a composition bias toward basic and acidic residues. The disordered stretch occupies residues glutamate 114 to phenylalanine 169. Residues serine 160, serine 166, and serine 182 each carry the phosphoserine modification.

As to quaternary structure, interacts with HSPA8. Interacts with TPH1. Interacts with TPH2. In terms of tissue distribution, expressed at high levels in brain, heart, and testis, and at reduced levels in kidney and stomach.

Its subcellular location is the cytoplasm. Probable co-chaperone that participates in the proper folding of biopterin-dependent aromatic amino acid hydroxylases, which include phenylalanine-4-hydroxylase (PAH), tyrosine 3-monooxygenase (TH) and peripheral and neuronal tryptophan hydroxylases (TPH1 and TPH2). This Homo sapiens (Human) protein is DnaJ homolog subfamily C member 12 (DNAJC12).